A 435-amino-acid polypeptide reads, in one-letter code: tRNA-2-methylthio-N(6)-dimethylallyladenosine synthase (435 aa).

An MTTase N-terminal domain is found at 2-117 (KKASIITYGC…IPQAIEKIEN (116 aa)). C11, C47, C80, C154, C158, and C161 together coordinate [4Fe-4S] cluster. The 231-residue stretch at 140-370 (FGSDQTASIS…MEVQNKCSFY (231 aa)) folds into the Radical SAM core domain. In terms of domain architecture, TRAM spans 373-435 (SKYKGRIVKV…KTWTLYGEIV (63 aa)).

It belongs to the methylthiotransferase family. MiaB subfamily. In terms of assembly, monomer. [4Fe-4S] cluster is required as a cofactor.

The protein resides in the cytoplasm. It catalyses the reaction N(6)-dimethylallyladenosine(37) in tRNA + (sulfur carrier)-SH + AH2 + 2 S-adenosyl-L-methionine = 2-methylsulfanyl-N(6)-dimethylallyladenosine(37) in tRNA + (sulfur carrier)-H + 5'-deoxyadenosine + L-methionine + A + S-adenosyl-L-homocysteine + 2 H(+). Functionally, catalyzes the methylthiolation of N6-(dimethylallyl)adenosine (i(6)A), leading to the formation of 2-methylthio-N6-(dimethylallyl)adenosine (ms(2)i(6)A) at position 37 in tRNAs that read codons beginning with uridine. The chain is tRNA-2-methylthio-N(6)-dimethylallyladenosine synthase from Fusobacterium nucleatum subsp. nucleatum (strain ATCC 25586 / DSM 15643 / BCRC 10681 / CIP 101130 / JCM 8532 / KCTC 2640 / LMG 13131 / VPI 4355).